The primary structure comprises 143 residues: Midkine (143 aa).

The N-terminal stretch at 1 to 20 (MQHRGFLLLTLLALLALTSA) is a signal peptide. Disulfide bonds link Cys37–Cys61, Cys45–Cys70, Cys52–Cys74, Cys84–Cys116, and Cys94–Cys126.

It belongs to the pleiotrophin family. As to quaternary structure, homodimer. Interacts with ALK. Interacts with LRP1; promotes neuronal survival. Interacts with LRP2. Interacts with NCAM1. Interacts (via C-terminal) with PTPRZ1 (via chondroitin sulfate chains); this interaction is inhibited by PTN; this interaction promotes neuronal migration. Interacts with NCL; this interaction promotes NCL clustering and lateral movements of this complex into lipid rafts leading to MDK internalization. Interacts with LRP6 and LRP8: this interaction is calcium dependent. Interacts with ITGA4. Interacts with ITGA6. Interacts with ITGB1. Interacts with ITGA4:ITGB1 complex; this interaction mediates MDK-induced osteoblast cells migration through PXN phosphorylation. Interacts with ITGA6:ITGB1 complex; this interaction mediates MDK-induced neurite outgrowth. Interacts with NOTCH2; this interaction mediates a nuclear accumulation of NOTCH2 and therefore activation of NOTCH2 signaling leading to interaction between HES1 and STAT3. Interacts with GPC2 (via heparan sulfate chain); this interaction is inhibited by heparin followed by chondroitin sulfate E; this interaction induces GPC2 clustering through heparan sulfate chain; this interaction induces neuronal cell adhesion and neurite outgrowth. Interacts with SDC3; this interaction induces SDC3 clustering; this interaction induces neuronal cell adhesion and neurite outgrowth. Interacts with SDC1. Interacts with CSPG5; this interaction promotes elongation of oligodendroglial precursor-like cells. In terms of tissue distribution, expressed in various tumor cell lines. In insulinoma tissue predominantly expressed in precancerous lesions.

The protein localises to the secreted. Functionally, secreted protein that functions as a cytokine and growth factor and mediates its signal through cell-surface proteoglycan and non-proteoglycan receptors. Binds cell-surface proteoglycan receptors via their chondroitin sulfate (CS) groups. Thereby regulates many processes like inflammatory response, cell proliferation, cell adhesion, cell growth, cell survival, tissue regeneration, cell differentiation and cell migration. Participates in inflammatory processes by exerting two different activities. Firstly, mediates neutrophils and macrophages recruitment to the sites of inflammation both by direct action by cooperating namely with ITGB2 via LRP1 and by inducing chemokine expression. This inflammation can be accompanied by epithelial cell survival and smooth muscle cell migration after renal and vessel damage, respectively. Secondly, suppresses the development of tolerogenic dendric cells thereby inhibiting the differentiation of regulatory T cells and also promote T cell expansion through NFAT signaling and Th1 cell differentiation. Promotes tissue regeneration after injury or trauma. After heart damage negatively regulates the recruitment of inflammatory cells and mediates cell survival through activation of anti-apoptotic signaling pathways via MAPKs and AKT pathways through the activation of angiogenesis. Also facilitates liver regeneration as well as bone repair by recruiting macrophage at trauma site and by promoting cartilage development by facilitating chondrocyte differentiation. Plays a role in brain by promoting neural precursor cells survival and growth through interaction with heparan sulfate proteoglycans. Binds PTPRZ1 and promotes neuronal migration and embryonic neurons survival. Binds SDC3 or GPC2 and mediates neurite outgrowth and cell adhesion. Binds chondroitin sulfate E and heparin leading to inhibition of neuronal cell adhesion induced by binding with GPC2. Binds CSPG5 and promotes elongation of oligodendroglial precursor-like cells. Also binds ITGA6:ITGB1 complex; this interaction mediates MDK-induced neurite outgrowth. Binds LRP1; promotes neuronal survival. Binds ITGA4:ITGB1 complex; this interaction mediates MDK-induced osteoblast cells migration through PXN phosphorylation. Binds anaplastic lymphoma kinase (ALK) which induces ALK activation and subsequent phosphorylation of the insulin receptor substrate (IRS1), followed by the activation of mitogen-activated protein kinase (MAPK) and PI3-kinase, and the induction of cell proliferation. Promotes epithelial to mesenchymal transition through interaction with NOTCH2. During arteriogenesis, plays a role in vascular endothelial cell proliferation by inducing VEGFA expression and release which in turn induces nitric oxide synthase expression. Moreover activates vasodilation through nitric oxide synthase activation. Negatively regulates bone formation in response to mechanical load by inhibiting Wnt/beta-catenin signaling in osteoblasts. In addition plays a role in hippocampal development, working memory, auditory response, early fetal adrenal gland development and the female reproductive system. The polypeptide is Midkine (Homo sapiens (Human)).